A 178-amino-acid chain; its full sequence is Mediator of RNA polymerase II transcription subunit 31 (178 aa).

The segment covering 129-140 (EGQELEESEDEA) has biased composition (acidic residues). Positions 129 to 178 (EGQELEESEDEADIRQKDTEDEDDEETMKKPDADTAEKNSTTSTVSKKEK) are disordered. The span at 155 to 165 (TMKKPDADTAE) shows a compositional bias: basic and acidic residues. Positions 166–178 (KNSTTSTVSKKEK) are enriched in polar residues.

Belongs to the Mediator complex subunit 31 family. Component of the Mediator complex.

Its subcellular location is the nucleus. Component of the Mediator complex, a coactivator involved in the regulated transcription of nearly all RNA polymerase II-dependent genes. Mediator functions as a bridge to convey information from gene-specific regulatory proteins to the basal RNA polymerase II transcription machinery. Mediator is recruited to promoters by direct interactions with regulatory proteins and serves as a scaffold for the assembly of a functional preinitiation complex with RNA polymerase II and the general transcription factors. This Caenorhabditis elegans protein is Mediator of RNA polymerase II transcription subunit 31.